The chain runs to 175 residues: Large ribosomal subunit protein uL10 (175 aa).

Belongs to the universal ribosomal protein uL10 family. In terms of assembly, part of the ribosomal stalk of the 50S ribosomal subunit. The N-terminus interacts with L11 and the large rRNA to form the base of the stalk. The C-terminus forms an elongated spine to which L12 dimers bind in a sequential fashion forming a multimeric L10(L12)X complex.

Forms part of the ribosomal stalk, playing a central role in the interaction of the ribosome with GTP-bound translation factors. The protein is Large ribosomal subunit protein uL10 of Desulfotalea psychrophila (strain LSv54 / DSM 12343).